The sequence spans 201 residues: IMP cyclohydrolase (201 aa).

This sequence belongs to the archaeal IMP cyclohydrolase family.

The catalysed reaction is IMP + H2O = 5-formamido-1-(5-phospho-D-ribosyl)imidazole-4-carboxamide. The protein operates within purine metabolism; IMP biosynthesis via de novo pathway; IMP from 5-formamido-1-(5-phospho-D-ribosyl)imidazole-4-carboxamide: step 1/1. Its function is as follows. Catalyzes the cyclization of 5-formylamidoimidazole-4-carboxamide ribonucleotide to IMP. The chain is IMP cyclohydrolase from Methanococcus maripaludis (strain C5 / ATCC BAA-1333).